A 509-amino-acid chain; its full sequence is Methionine--tRNA ligase (509 aa).

The 'HIGH' region signature appears at Y12–H22. A 'KMSKS' region motif is present at residues K295–S299. An ATP-binding site is contributed by K298.

It belongs to the class-I aminoacyl-tRNA synthetase family. MetG type 2B subfamily. In terms of assembly, monomer.

The protein resides in the cytoplasm. The enzyme catalyses tRNA(Met) + L-methionine + ATP = L-methionyl-tRNA(Met) + AMP + diphosphate. Functionally, is required not only for elongation of protein synthesis but also for the initiation of all mRNA translation through initiator tRNA(fMet) aminoacylation. In Rickettsia bellii (strain RML369-C), this protein is Methionine--tRNA ligase.